The chain runs to 299 residues: tRNA pseudouridine synthase A (299 aa).

Aspartate 67 (nucleophile) is an active-site residue. Residue tyrosine 125 participates in substrate binding.

Belongs to the tRNA pseudouridine synthase TruA family. In terms of assembly, homodimer.

The enzyme catalyses uridine(38/39/40) in tRNA = pseudouridine(38/39/40) in tRNA. In terms of biological role, formation of pseudouridine at positions 38, 39 and 40 in the anticodon stem and loop of transfer RNAs. In Parasynechococcus marenigrum (strain WH8102), this protein is tRNA pseudouridine synthase A.